Reading from the N-terminus, the 430-residue chain is Glutamate-1-semialdehyde 2,1-aminomutase (430 aa).

K265 carries the post-translational modification N6-(pyridoxal phosphate)lysine.

The protein belongs to the class-III pyridoxal-phosphate-dependent aminotransferase family. HemL subfamily. In terms of assembly, homodimer. Requires pyridoxal 5'-phosphate as cofactor.

The protein resides in the cytoplasm. It catalyses the reaction (S)-4-amino-5-oxopentanoate = 5-aminolevulinate. It participates in porphyrin-containing compound metabolism; protoporphyrin-IX biosynthesis; 5-aminolevulinate from L-glutamyl-tRNA(Glu): step 2/2. The sequence is that of Glutamate-1-semialdehyde 2,1-aminomutase from Shewanella sp. (strain ANA-3).